The primary structure comprises 300 residues: 7-methylguanosine phosphate-specific 5'-nucleotidase (300 aa).

The active-site Nucleophile is the aspartate 41. Mg(2+) contacts are provided by aspartate 41 and aspartate 43. The active-site Proton donor is aspartate 43. A CMP-binding site is contributed by glutamate 88. Residue glutamate 88 participates in N(7)-methyl-GMP binding. Residues 156–157 and lysine 205 contribute to the substrate site; that span reads SA. Residue aspartate 230 coordinates Mg(2+). At lysine 256 the chain carries N6-acetyllysine.

This sequence belongs to the pyrimidine 5'-nucleotidase family. In terms of assembly, monomer.

It is found in the cytoplasm. The catalysed reaction is N(7)-methyl-GMP + H2O = N(7)-methylguanosine + phosphate. The enzyme catalyses CMP + H2O = cytidine + phosphate. It catalyses the reaction a ribonucleoside 5'-phosphate + H2O = a ribonucleoside + phosphate. In terms of biological role, specifically hydrolyzes 7-methylguanosine monophosphate (m(7)GMP) to 7-methylguanosine and inorganic phosphate. The specific activity for m(7)GMP may protect cells against undesired salvage of m(7)GMP and its incorporation into nucleic acids. Also has weak activity for CMP. UMP and purine nucleotides are poor substrates. In Rattus norvegicus (Rat), this protein is 7-methylguanosine phosphate-specific 5'-nucleotidase (Nt5c3b).